The chain runs to 516 residues: MEELQGYLEKDRSRQQHFLYPLLFQEYIYALAHDYGLNGSIFYESAEVFGYDNKSSLALVKRLITRIYQQKSLIYLVNNSKQNRFVGHTHNNFFYSQMISESFSIIVEIPFSLRLVSYLKEKEIPKYHNLRSIHSIFPFLEDKLSHLNYVSAILIPHPIHMEILVQILQCWIQDVPFLHLLRFFLHEYHNWNSFLITQKKSIFVFSKEKKRLFRFIYNFYVFECEFLFVFIRNQSSYLRLTSFGTFLERTHFYGKIEHLQIEKLIVICRNDFHRTFWFFKDPFMHYVRYQGKAILASKGTHLLMTKWKYHFVNFWQYYFNFWSQPYRIQINQLSNYSFYFLGYLSSLLINSSAVRNQMLENSFIIDTLTKKFDTIVPVILLIGSLSKAKFCTISGHPISKPIWANLSDSDILDRFGRICRNLFHYHSGSSKKQGLYRIKYILRLSCARTLARKHKSTVRTFLRRLGSGLLEEFFTEEEEVLSLMFPKTTSYTLHGSHRERIWFLDIIRINDLVNRS.

Belongs to the intron maturase 2 family. MatK subfamily.

Its subcellular location is the plastid. The protein localises to the chloroplast. Its function is as follows. Usually encoded in the trnK tRNA gene intron. Probably assists in splicing its own and other chloroplast group II introns. The chain is Maturase K from Galanthus nivalis (Common snowdrop).